The sequence spans 353 residues: L-tryptophan dehydrogenase (353 aa).

Arginine 44 is a binding site for NAD(+). Lysine 80 serves as the catalytic Proton donor/acceptor. NAD(+)-binding positions include aspartate 114, threonine 146, 176-181, lysine 204, and 255-257; these read GLGNVG and AAN.

It belongs to the Glu/Leu/Phe/Val dehydrogenases family. Homodimer.

It carries out the reaction L-tryptophan + NAD(+) + H2O = indole-3-pyruvate + NH4(+) + NADH + H(+). Catalyzes the reversible oxidative deamination of L-tryptophan to indole-3-pyruvate in the presence of NAD(+). Cannot use other L-amino acids and D-Trp. Involved in the biosynthesis of scytonemin, a cyanobacterial radiation-absorbing pigment. The polypeptide is L-tryptophan dehydrogenase (Nostoc punctiforme (strain ATCC 29133 / PCC 73102)).